The sequence spans 79 residues: Large ribosomal subunit protein uL30 (79 aa).

It belongs to the universal ribosomal protein uL30 family. Part of the 50S ribosomal subunit.

In Anaeromyxobacter sp. (strain Fw109-5), this protein is Large ribosomal subunit protein uL30.